Consider the following 273-residue polypeptide: Dermonecrotic toxin LdSicTox-alphaIB1bii (273 aa).

His-5 is an active-site residue. The Mg(2+) site is built by Glu-25 and Asp-27. The active-site Nucleophile is the His-41. 2 cysteine pairs are disulfide-bonded: Cys-45–Cys-51 and Cys-47–Cys-190. Asp-85 provides a ligand contact to Mg(2+). Residue Asn-250 is glycosylated (N-linked (GlcNAc...) asparagine).

Belongs to the arthropod phospholipase D family. Class II subfamily. It depends on Mg(2+) as a cofactor. In terms of tissue distribution, expressed by the venom gland.

It localises to the secreted. It carries out the reaction an N-(acyl)-sphingosylphosphocholine = an N-(acyl)-sphingosyl-1,3-cyclic phosphate + choline. It catalyses the reaction an N-(acyl)-sphingosylphosphoethanolamine = an N-(acyl)-sphingosyl-1,3-cyclic phosphate + ethanolamine. The enzyme catalyses a 1-acyl-sn-glycero-3-phosphocholine = a 1-acyl-sn-glycero-2,3-cyclic phosphate + choline. The catalysed reaction is a 1-acyl-sn-glycero-3-phosphoethanolamine = a 1-acyl-sn-glycero-2,3-cyclic phosphate + ethanolamine. Its function is as follows. Dermonecrotic toxins cleave the phosphodiester linkage between the phosphate and headgroup of certain phospholipids (sphingolipid and lysolipid substrates), forming an alcohol (often choline) and a cyclic phosphate. This toxin acts on sphingomyelin (SM). It may also act on ceramide phosphoethanolamine (CPE), lysophosphatidylcholine (LPC) and lysophosphatidylethanolamine (LPE), but not on lysophosphatidylserine (LPS), and lysophosphatidylglycerol (LPG). It acts by transphosphatidylation, releasing exclusively cyclic phosphate products as second products. Induces dermonecrosis, hemolysis, increased vascular permeability, edema, inflammatory response, and platelet aggregation. This chain is Dermonecrotic toxin LdSicTox-alphaIB1bii, found in Loxosceles deserta (Desert recluse spider).